A 571-amino-acid chain; its full sequence is MVKISRQAYAEMFGPTTGDRVRLADTGLVIEVEKDFTIYGEEVKFGGGKVIRDGMGQSQRMAKDCVDTVITNALIVDHWGIVKADIGLKGGRIAAIGKAGNPDIQPGVTIVVGPGTEVIAGEGMIVTAGGIDTHIHFICPQQIEEALMSGVTTMIGGGTGPATGTFATTVTPGPWYMERMLQAIEAYPMNIGLLGKGNASQQAPILEQVEAGAIGLKLHEDWGTTPAAIDTCLSVADATDTQVAIHTDTLNEAGFVEATIAAFKGRTIHTYHTEGAGGGHAPDIIKVCGEANVLPSSTNPTRPYTVNTLDEHLDMLMVCHHLDPAIAEDIAFAESRIRRETIAAEDILHDLGAFSMISSDSQAMGRVGEVIIRTWQTAHKMAAQRGKLPGDPNDARGGHDNFRVKRYIAKYTINPALTHGIAHEVGSIEVGKWADLVLWRPACFGVKPSLILKGGMIAAAAMGDPNASIPTPQPVHYRPMFASAGGALHKSSLTFVSQAALAANVGERYGLAKTLSAVRGTRTVSKRDMVHNDWQPHVTVDPETYQVVADGQLLMCDPATELPMAQRYFLF.

The Urease domain occupies G129–F571. Ni(2+) is bound by residues H134, H136, and K217. At K217 the chain carries N6-carboxylysine. H219 contributes to the substrate binding site. Ni(2+) is bound by residues H246 and H272. H320 functions as the Proton donor in the catalytic mechanism. Ni(2+) is bound at residue D360.

Belongs to the metallo-dependent hydrolases superfamily. Urease alpha subunit family. As to quaternary structure, heterotrimer of UreA (gamma), UreB (beta) and UreC (alpha) subunits. Three heterotrimers associate to form the active enzyme. Ni cation is required as a cofactor. Carboxylation allows a single lysine to coordinate two nickel ions.

Its subcellular location is the cytoplasm. It catalyses the reaction urea + 2 H2O + H(+) = hydrogencarbonate + 2 NH4(+). Its pathway is nitrogen metabolism; urea degradation; CO(2) and NH(3) from urea (urease route): step 1/1. In Cupriavidus pinatubonensis (strain JMP 134 / LMG 1197) (Cupriavidus necator (strain JMP 134)), this protein is Urease subunit alpha.